A 246-amino-acid polypeptide reads, in one-letter code: MGPQHLSPMQLLCLLGAISSLPWAEALLCYEATSSLFRAVGLHRWQWFLLRSMVCKLNEGCEETLVFIEAGTRKGILGFKGCSPASSYPPQVSYLVSPPGLSIASYSRVCRTYLCNNLTNMNAILHLKARTPKTLKSSSHSCPTCVGEHSKSCLPNFVSSESCPRDATKCYSSTVKFQAGFLNTTFLLMGCAREHTSVFAHFHHIGSIRVTEVINIVEKALFTGAGTPCRSPSWGILLGLLFAFKG.

The signal sequence occupies residues 1–26 (MGPQHLSPMQLLCLLGAISSLPWAEA). Asn-117 carries an N-linked (GlcNAc...) asparagine glycan. The region spanning 142-223 (CPTCVGEHSK…INIVEKALFT (82 aa)) is the UPAR/Ly6 domain. The GPI-anchor amidated alanine moiety is linked to residue Ala-225. The propeptide at 226-246 (GTPCRSPSWGILLGLLFAFKG) is removed in mature form.

Its subcellular location is the cell membrane. The protein is Ly6/PLAUR domain-containing protein 4 (LYPD4) of Bos taurus (Bovine).